The primary structure comprises 446 residues: DDB1- and CUL4-associated factor 12 (446 aa).

Residues 1 to 12 (MTRRAVSRKRRA) are compositionally biased toward basic residues. Residues 1 to 33 (MTRRAVSRKRRAAPGTGPGEQSDWDHSAHKRKR) are disordered. WD repeat units follow at residues 132 to 173 (SHQS…PVCV), 177 to 215 (GHNDWIFSIAWISDTMAVSGSRDGSMALWEMTEEILSKS), 245 to 284 (PVNCKVRALAFNSKNKELGAVSLDGFFHLWKAELTLAKLL), and 333 to 370 (EQGSGIRSVSFYEHIVTVGTGQGALLFYDIRAQRFLED).

Belongs to the WD repeat DCAF12 family. In terms of assembly, component of the DCX(DCAF12) E3 ubiquitin ligase complex, at least composed of cul4 (cul4a or cul4b), ddb1, dcaf12 and rbx1.

The protein localises to the cytoplasm. It is found in the cytoskeleton. The protein resides in the microtubule organizing center. Its subcellular location is the centrosome. It localises to the nucleus. Its pathway is protein modification; protein ubiquitination. Its function is as follows. Substrate-recognition component of a DCX (DDB1-CUL4-X-box) E3 ubiquitin-protein ligase complex of the DesCEND (destruction via C-end degrons) pathway, which recognizes a C-degron located at the extreme C terminus of target proteins, leading to their ubiquitination and degradation. The C-degron recognized by the DesCEND pathway is usually a motif of less than ten residues and can be present in full-length proteins, truncated proteins or proteolytically cleaved forms. The DCX(DCAF12) complex specifically recognizes proteins with a diglutamate (Glu-Glu) at the C-terminus leading to their ubiquitination and degradation. Also directly recognizes the C-terminal glutamate-leucine (Glu-Leu) degron as an alternative degron in proteins leading to their ubiquitination and degradation. This is DDB1- and CUL4-associated factor 12 from Xenopus tropicalis (Western clawed frog).